The following is a 97-amino-acid chain: Pyrin domain-containing protein 2 (97 aa).

Positions 1–94 (MASSAELDFN…SGRADEHCVM (94 aa)) constitute a Pyrin domain.

In terms of assembly, interacts with PYCARD/ASC (via pyrin domain). Interacts with NLRP2 (via pyrin domain). In terms of tissue distribution, predominantly expressed in peripheral blood. Weakly expressed in testis.

It localises to the cytoplasm. Its subcellular location is the nucleus. Its function is as follows. May play a role in innate immunity by disrupting the interaction between PYCARD and NLRP3, thereby regulating the NLRP3 inflammasome. May also inhibit NF-kappa-B signaling distally by affecting the nuclear accumulation of RELA. In Homo sapiens (Human), this protein is Pyrin domain-containing protein 2.